The chain runs to 372 residues: MADS-box transcription factor pvg4 (372 aa).

In terms of domain architecture, MADS-box spans 1 to 61 (MGRKKISIAP…GRLHVFCSSD (61 aa)). The disordered stretch occupies residues 81–187 (SHFSSSPVEE…HPPHPHFHNN (107 aa)). A compositionally biased stretch (low complexity) spans 84–100 (SSSPVEESSTVSPETTT). The span at 114–145 (QDQPLSDSQLDTGDSPATSETTVQDYNPQVQS) shows a compositional bias: polar residues. The span at 167–184 (QHHHPHTRPPHHPPHPHF) shows a compositional bias: basic residues.

The protein resides in the nucleus. Functionally, acts in transcription regulation. May bind to a MEF2-like typee II promoter sequence. This is MADS-box transcription factor pvg4 (pvg4) from Schizosaccharomyces pombe (strain 972 / ATCC 24843) (Fission yeast).